We begin with the raw amino-acid sequence, 284 residues long: MQNKIVKIGNIDVANDKPFVLFGGMNVLESRDMAMQVCESYVKVTEKLGVPYVFKASFDKANRSSIHSYRGPGMEEGLKIFQELKDTFGVKIITDVHEIYQCQPVADVVDIIQLPAFLARQTDLVEAMAKTGAVINVKKPQFLSPSQMGNIVEKIEECGNDKIILCDRGTNFGYDNLIVDMLGFSVMKKASKGSPVIFDVTHSLQCRDPFGAASSGRRAQVTELARSGLAVGIAGLFLEAHPNPNQAKCDGPSALPLSALEGFVFQMKAIDDLVKSFPELDTSI.

Belongs to the KdsA family.

The protein resides in the cytoplasm. It catalyses the reaction D-arabinose 5-phosphate + phosphoenolpyruvate + H2O = 3-deoxy-alpha-D-manno-2-octulosonate-8-phosphate + phosphate. The protein operates within carbohydrate biosynthesis; 3-deoxy-D-manno-octulosonate biosynthesis; 3-deoxy-D-manno-octulosonate from D-ribulose 5-phosphate: step 2/3. It participates in bacterial outer membrane biogenesis; lipopolysaccharide biosynthesis. In Haemophilus influenzae (strain PittEE), this protein is 2-dehydro-3-deoxyphosphooctonate aldolase.